The chain runs to 172 residues: Large ribosomal subunit protein uL10 (172 aa).

It belongs to the universal ribosomal protein uL10 family. As to quaternary structure, part of the ribosomal stalk of the 50S ribosomal subunit. The N-terminus interacts with L11 and the large rRNA to form the base of the stalk. The C-terminus forms an elongated spine to which L12 dimers bind in a sequential fashion forming a multimeric L10(L12)X complex.

In terms of biological role, forms part of the ribosomal stalk, playing a central role in the interaction of the ribosome with GTP-bound translation factors. This chain is Large ribosomal subunit protein uL10, found in Acidothermus cellulolyticus (strain ATCC 43068 / DSM 8971 / 11B).